The primary structure comprises 856 residues: Rod cGMP-specific 3',5'-cyclic phosphodiesterase subunit beta (856 aa).

Ser-2 is subject to N-acetylserine. 2 consecutive GAF domains span residues 71 to 220 (NMER…TLNL) and 252 to 429 (DIER…GWSV). The PDEase domain maps to 481–814 (EEDELGILLK…KEWKALADEY (334 aa)). The Proton donor role is filled by His-557. 4 residues coordinate a divalent metal cation: His-561, His-597, Asp-598, and Asp-718. Over residues 823-833 (EEKQQQEDRTT) the composition is skewed to basic and acidic residues. The disordered stretch occupies residues 823–842 (EEKQQQEDRTTAKKAGTEIC). A lipid anchor (S-geranylgeranyl cysteine) is attached at Cys-853. A propeptide spans 854–856 (CIL) (removed in mature form).

The protein belongs to the cyclic nucleotide phosphodiesterase family. In terms of assembly, oligomer composed of two catalytic chains (alpha and beta), an inhibitory chain (gamma) and the delta chain. A divalent metal cation serves as cofactor.

The protein resides in the membrane. The protein localises to the cell projection. It localises to the cilium. It is found in the photoreceptor outer segment. The enzyme catalyses 3',5'-cyclic GMP + H2O = GMP + H(+). Its function is as follows. Rod-specific cGMP phosphodiesterase that catalyzes the hydrolysis of 3',5'-cyclic GMP. Necessary for the formation of a functional phosphodiesterase holoenzyme. Involved in retinal circadian rhythm photoentrainment via modulation of UVA and orange light-induced phase-shift of the retina clock. May participate in processes of transmission and amplification of the visual signal. The protein is Rod cGMP-specific 3',5'-cyclic phosphodiesterase subunit beta of Canis lupus familiaris (Dog).